Consider the following 286-residue polypeptide: Protein MGF 360-3L (286 aa).

The helical transmembrane segment at 1–17 threads the bilayer; the sequence is MKVLLELLLGYSVLILA. N-linked (GlcNAc...) asparagine; by host glycosylation is present at asparagine 61. 2 helical membrane-spanning segments follow: residues 128-148 and 153-173; these read HCCF…FVYN and LNTT…SQPA. 2 N-linked (GlcNAc...) asparagine; by host glycosylation sites follow: asparagine 238 and asparagine 263.

It belongs to the asfivirus MGF 110 family.

Its subcellular location is the host membrane. In terms of biological role, plays a role in virus cell tropism, and may be required for efficient virus replication in macrophages. The protein is Protein MGF 360-3L of African swine fever virus (isolate Tick/Malawi/Lil 20-1/1983) (ASFV).